A 119-amino-acid polypeptide reads, in one-letter code: Ribonuclease P protein component (119 aa).

Belongs to the RnpA family. As to quaternary structure, consists of a catalytic RNA component (M1 or rnpB) and a protein subunit.

The catalysed reaction is Endonucleolytic cleavage of RNA, removing 5'-extranucleotides from tRNA precursor.. Its function is as follows. RNaseP catalyzes the removal of the 5'-leader sequence from pre-tRNA to produce the mature 5'-terminus. It can also cleave other RNA substrates such as 4.5S RNA. The protein component plays an auxiliary but essential role in vivo by binding to the 5'-leader sequence and broadening the substrate specificity of the ribozyme. The chain is Ribonuclease P protein component from Yersinia enterocolitica serotype O:8 / biotype 1B (strain NCTC 13174 / 8081).